Reading from the N-terminus, the 77-residue chain is DNA-directed RNA polymerase subunit epsilon (77 aa).

The protein belongs to the RNA polymerase subunit epsilon family. RNAP is composed of a core of 2 alpha, a beta and a beta' subunit. The core is associated with a delta subunit, and at least one of epsilon or omega. When a sigma factor is associated with the core the holoenzyme is formed, which can initiate transcription.

It carries out the reaction RNA(n) + a ribonucleoside 5'-triphosphate = RNA(n+1) + diphosphate. Its function is as follows. A non-essential component of RNA polymerase (RNAP). The sequence is that of DNA-directed RNA polymerase subunit epsilon from Streptococcus pneumoniae serotype 2 (strain D39 / NCTC 7466).